The sequence spans 455 residues: Peroxisomal membrane protein PEX3 (455 aa).

The span at 113–125 shows a compositional bias: polar residues; that stretch reads TVLSDDFSTSQEG. The disordered stretch occupies residues 113 to 135; that stretch reads TVLSDDFSTSQEGAISEDTNKPP. A helical transmembrane segment spans residues 155–171; that stretch reads FLTLIYCESLLIVFLHL.

This sequence belongs to the peroxin-3 family. Component of the peroxisomal docking complex, composed of at least PEX3, PEX13, PEX14 and PEX17. Component of the peroxisomal translocation complex, composed of at least PEX3, PEX2, PEX10 and PEX12. Interacts with PEX19. Interacts with the pexophagy receptor ATG30.

The protein resides in the peroxisome membrane. Functionally, peroxisomal membrane protein required for peroxisome biosynthesis. Shared component of both the peroxisomal docking complex and the peroxisomal translocation complex. The two types of peroxisomal matrix targeting signals, PTS1 and PTS2, are first recognized in the cytosol by their receptors PEX5 and PEX7, respectively, which then carry the cargo to the peroxisomal membrane. The peroxisomal targeting signal (PTS) receptor-cargo complexes interact with peroxisomal membrane protein (PMP) components of the docking complex. They have then additional downstream interactions with the translocation complex, leading to the transport of fully folded and oligomerized cargo into the peroxisome matrix. PEX3 acts as an anchoring site for PEX19 on the peroxisomal membrane and thus plays a crucial role in the assembly of the peroxisomal translocation complex. Is also essential for the interaction between the two complexes. Finally. PEX3 activates selective autophagy of peroxisomes (pexophagy) via interaction with the pexophagy receptor ATG30. The protein is Peroxisomal membrane protein PEX3 of Komagataella phaffii (strain GS115 / ATCC 20864) (Yeast).